A 105-amino-acid chain; its full sequence is Large ribosomal subunit protein bL21 (105 aa).

Belongs to the bacterial ribosomal protein bL21 family. Part of the 50S ribosomal subunit. Contacts protein L20.

Functionally, this protein binds to 23S rRNA in the presence of protein L20. This Stenotrophomonas maltophilia (strain R551-3) protein is Large ribosomal subunit protein bL21.